Here is a 226-residue protein sequence, read N- to C-terminus: Thiamine-phosphate synthase (226 aa).

Residues 46-50 (QFRDK) and Asp-83 each bind 4-amino-2-methyl-5-(diphosphooxymethyl)pyrimidine. Residues Asp-84 and Asp-103 each coordinate Mg(2+). A 4-amino-2-methyl-5-(diphosphooxymethyl)pyrimidine-binding site is contributed by Ser-122. Residue 149 to 151 (TQS) coordinates 2-[(2R,5Z)-2-carboxy-4-methylthiazol-5(2H)-ylidene]ethyl phosphate. Lys-152 provides a ligand contact to 4-amino-2-methyl-5-(diphosphooxymethyl)pyrimidine. 2-[(2R,5Z)-2-carboxy-4-methylthiazol-5(2H)-ylidene]ethyl phosphate contacts are provided by residues Gly-181 and 201 to 202 (IT).

The protein belongs to the thiamine-phosphate synthase family. Mg(2+) serves as cofactor.

The enzyme catalyses 2-[(2R,5Z)-2-carboxy-4-methylthiazol-5(2H)-ylidene]ethyl phosphate + 4-amino-2-methyl-5-(diphosphooxymethyl)pyrimidine + 2 H(+) = thiamine phosphate + CO2 + diphosphate. The catalysed reaction is 2-(2-carboxy-4-methylthiazol-5-yl)ethyl phosphate + 4-amino-2-methyl-5-(diphosphooxymethyl)pyrimidine + 2 H(+) = thiamine phosphate + CO2 + diphosphate. It carries out the reaction 4-methyl-5-(2-phosphooxyethyl)-thiazole + 4-amino-2-methyl-5-(diphosphooxymethyl)pyrimidine + H(+) = thiamine phosphate + diphosphate. It participates in cofactor biosynthesis; thiamine diphosphate biosynthesis; thiamine phosphate from 4-amino-2-methyl-5-diphosphomethylpyrimidine and 4-methyl-5-(2-phosphoethyl)-thiazole: step 1/1. Its function is as follows. Condenses 4-methyl-5-(beta-hydroxyethyl)thiazole monophosphate (THZ-P) and 2-methyl-4-amino-5-hydroxymethyl pyrimidine pyrophosphate (HMP-PP) to form thiamine monophosphate (TMP). This Haemophilus influenzae (strain ATCC 51907 / DSM 11121 / KW20 / Rd) protein is Thiamine-phosphate synthase.